An 83-amino-acid polypeptide reads, in one-letter code: Small ribosomal subunit protein eS21 (83 aa).

It belongs to the eukaryotic ribosomal protein eS21 family. As to quaternary structure, component of the 40S small ribosomal subunit.

The protein resides in the cytoplasm. The protein localises to the cytosol. It is found in the rough endoplasmic reticulum. In terms of biological role, component of the small ribosomal subunit. The ribosome is a large ribonucleoprotein complex responsible for the synthesis of proteins in the cell. The polypeptide is Small ribosomal subunit protein eS21 (rps21) (Xenopus laevis (African clawed frog)).